The chain runs to 445 residues: Glucose-6-phosphate isomerase 2 (445 aa).

The active-site Proton donor is the E285. Active-site residues include H306 and K420.

Belongs to the GPI family. As to quaternary structure, homodimer.

The protein resides in the cytoplasm. The catalysed reaction is alpha-D-glucose 6-phosphate = beta-D-fructose 6-phosphate. It participates in carbohydrate biosynthesis; gluconeogenesis. Its pathway is carbohydrate degradation; glycolysis; D-glyceraldehyde 3-phosphate and glycerone phosphate from D-glucose: step 2/4. Its function is as follows. Catalyzes the reversible isomerization of glucose-6-phosphate to fructose-6-phosphate. This is Glucose-6-phosphate isomerase 2 from Geobacillus stearothermophilus (Bacillus stearothermophilus).